A 189-amino-acid chain; its full sequence is Elongation factor P 2 (189 aa).

This sequence belongs to the elongation factor P family.

The protein localises to the cytoplasm. Its pathway is protein biosynthesis; polypeptide chain elongation. Functionally, involved in peptide bond synthesis. Stimulates efficient translation and peptide-bond synthesis on native or reconstituted 70S ribosomes in vitro. Probably functions indirectly by altering the affinity of the ribosome for aminoacyl-tRNA, thus increasing their reactivity as acceptors for peptidyl transferase. The protein is Elongation factor P 2 of Mesorhizobium japonicum (strain LMG 29417 / CECT 9101 / MAFF 303099) (Mesorhizobium loti (strain MAFF 303099)).